A 639-amino-acid chain; its full sequence is Threonine--tRNA ligase (639 aa).

The region spanning 1 to 61 is the TGS domain; sequence MIHITLPDGS…TADCRLSIIT (61 aa). A catalytic region spans residues 242–533; sequence DHRKLGRELD…LLEQHAGALP (292 aa). Cys333, His384, and His510 together coordinate Zn(2+).

It belongs to the class-II aminoacyl-tRNA synthetase family. Homodimer. Zn(2+) is required as a cofactor.

It localises to the cytoplasm. It catalyses the reaction tRNA(Thr) + L-threonine + ATP = L-threonyl-tRNA(Thr) + AMP + diphosphate + H(+). In terms of biological role, catalyzes the attachment of threonine to tRNA(Thr) in a two-step reaction: L-threonine is first activated by ATP to form Thr-AMP and then transferred to the acceptor end of tRNA(Thr). Also edits incorrectly charged L-seryl-tRNA(Thr). In Verminephrobacter eiseniae (strain EF01-2), this protein is Threonine--tRNA ligase.